Here is an 876-residue protein sequence, read N- to C-terminus: Alanine--tRNA ligase (876 aa).

The Zn(2+) site is built by histidine 565, histidine 569, cysteine 667, and histidine 671.

It belongs to the class-II aminoacyl-tRNA synthetase family. Zn(2+) serves as cofactor.

The protein localises to the cytoplasm. The catalysed reaction is tRNA(Ala) + L-alanine + ATP = L-alanyl-tRNA(Ala) + AMP + diphosphate. Its function is as follows. Catalyzes the attachment of alanine to tRNA(Ala) in a two-step reaction: alanine is first activated by ATP to form Ala-AMP and then transferred to the acceptor end of tRNA(Ala). Also edits incorrectly charged Ser-tRNA(Ala) and Gly-tRNA(Ala) via its editing domain. The polypeptide is Alanine--tRNA ligase (Staphylococcus epidermidis (strain ATCC 35984 / DSM 28319 / BCRC 17069 / CCUG 31568 / BM 3577 / RP62A)).